Consider the following 126-residue polypeptide: Arginine decarboxylase proenzyme (126 aa).

Catalysis depends on S74, which acts as the Schiff-base intermediate with substrate; via pyruvic acid. S74 bears the Pyruvic acid (Ser); by autocatalysis mark. The active-site Proton acceptor; for processing activity is H79. Residue C94 is the Proton donor; for catalytic activity of the active site.

This sequence belongs to the prokaryotic AdoMetDC family. Type 1 subfamily. As to quaternary structure, heterooctamer of four alpha and four beta chains arranged as a tetramer of alpha/beta heterodimers. The cofactor is pyruvate. Post-translationally, is synthesized initially as an inactive proenzyme. Formation of the active enzyme involves a self-maturation process in which the active site pyruvoyl group is generated from an internal serine residue via an autocatalytic post-translational modification. Two non-identical subunits are generated from the proenzyme in this reaction, and the pyruvate is formed at the N-terminus of the alpha chain, which is derived from the carboxyl end of the proenzyme. The post-translation cleavage follows an unusual pathway, termed non-hydrolytic serinolysis, in which the side chain hydroxyl group of the serine supplies its oxygen atom to form the C-terminus of the beta chain, while the remainder of the serine residue undergoes an oxidative deamination to produce ammonia and the pyruvoyl group blocking the N-terminus of the alpha chain.

It carries out the reaction L-arginine + H(+) = agmatine + CO2. The protein operates within amine and polyamine biosynthesis; agmatine biosynthesis; agmatine from L-arginine: step 1/1. In terms of biological role, specifically catalyzes the decarboxylation of L-arginine to agmatine. Has no S-adenosylmethionine decarboxylase (AdoMetDC) activity. This Pyrobaculum aerophilum (strain ATCC 51768 / DSM 7523 / JCM 9630 / CIP 104966 / NBRC 100827 / IM2) protein is Arginine decarboxylase proenzyme.